The sequence spans 394 residues: Elongation factor Tu (394 aa).

A tr-type G domain is found at lysine 10–valine 204. Positions glycine 19–threonine 26 are G1. Glycine 19 to threonine 26 is a GTP binding site. Position 26 (threonine 26) interacts with Mg(2+). The segment at glycine 60–serine 64 is G2. The interval aspartate 81 to glycine 84 is G3. Residues aspartate 81–histidine 85 and asparagine 136–aspartate 139 each bind GTP. The interval asparagine 136–aspartate 139 is G4. The tract at residues serine 174 to leucine 176 is G5.

This sequence belongs to the TRAFAC class translation factor GTPase superfamily. Classic translation factor GTPase family. EF-Tu/EF-1A subfamily. Monomer.

The protein resides in the cytoplasm. The enzyme catalyses GTP + H2O = GDP + phosphate + H(+). Functionally, GTP hydrolase that promotes the GTP-dependent binding of aminoacyl-tRNA to the A-site of ribosomes during protein biosynthesis. The protein is Elongation factor Tu of Rickettsia felis (strain ATCC VR-1525 / URRWXCal2) (Rickettsia azadi).